We begin with the raw amino-acid sequence, 570 residues long: Sulfite reductase [NADPH] hemoprotein beta-component (570 aa).

The [4Fe-4S] cluster site is built by Cys-434, Cys-440, Cys-479, and Cys-483. Residue Cys-483 coordinates siroheme.

This sequence belongs to the nitrite and sulfite reductase 4Fe-4S domain family. In terms of assembly, alpha(8)-beta(8). The alpha component is a flavoprotein, the beta component is a hemoprotein. It depends on siroheme as a cofactor. Requires [4Fe-4S] cluster as cofactor.

The catalysed reaction is hydrogen sulfide + 3 NADP(+) + 3 H2O = sulfite + 3 NADPH + 4 H(+). The protein operates within sulfur metabolism; hydrogen sulfide biosynthesis; hydrogen sulfide from sulfite (NADPH route): step 1/1. Functionally, component of the sulfite reductase complex that catalyzes the 6-electron reduction of sulfite to sulfide. This is one of several activities required for the biosynthesis of L-cysteine from sulfate. The chain is Sulfite reductase [NADPH] hemoprotein beta-component from Escherichia coli (strain SMS-3-5 / SECEC).